Here is a 273-residue protein sequence, read N- to C-terminus: MEPYLSNELFPPPTEAWLQTVSSDPEAQGWGAWGRTEKTSLVPRAGSRAGSDKEAEENEDASFLLSLLEPENLAKSPVFNQELEAIKLKLWAMEHAEAQPEPPCVQRKATEEERAEVRQLLSPETVDCFFSRTSKENVEADHRSVFVGNVDYGGSAAELEAYFSPCGEIHRVTILCDKFSGHPKGYAYIEFASHRSVKAAVGLDESTFRGRVIKVLPKRTNFPGISSTDRGGLRTHSGNRAAFLHGSLHRKARLRAHGRSRGHGGAPQWFSPY.

The interval 22 to 57 (SSDPEAQGWGAWGRTEKTSLVPRAGSRAGSDKEAEE) is disordered. The region spanning 143 to 220 (RSVFVGNVDY…RVIKVLPKRT (78 aa)) is the RRM domain.

The protein resides in the cytoplasm. Its function is as follows. Binds the poly(A) tail of mRNA. The sequence is that of Embryonic polyadenylate-binding protein 2 (Pabpn1l) from Mus musculus (Mouse).